Consider the following 299-residue polypeptide: Homeobox protein ceh-24 (299 aa).

The span at 1 to 35 (MSEKETPSPVLDVKKEKNEETGIDEEKSSEDDCSK) shows a compositional bias: basic and acidic residues. 2 disordered regions span residues 1–45 (MSEK…NPSK) and 208–263 (QEKE…SGVF). Residues 150 to 209 (RRKRRVLFSQAQVYELERRFKQAKYLTAPEREQLANSIRLTPTQVKIWFQNHRYKCKRQE) constitute a DNA-binding region (homeobox). Residues 242–252 (DDKDDEEEEES) are compositionally biased toward acidic residues.

It belongs to the NK-2 homeobox family. In terms of tissue distribution, expressed in the 8 vulval muscles, 8-10 ventral neurons in the head and in the most posterior pharyngeal muscle cell, m8. Expressed in SIA, SIB and SMB sublateral motor neurons, and in muscles of the pharynx and vulva.

It is found in the nucleus. Probable transcriptional regulator that is required in neural development for the normal formation of sublateral cholinergic motor neuron processes. Plays a role in regulating the expression of acetylcholine transporter protein unc-17 in the sublateral processes. In particular, it is required in sublateral motor neurons for a left-right turning behavior that occurs during the lethargus phase of the normal sleep process called 'flipping'. During 'flipping' animals rotate 180 degrees about their longitudinal axis. This chain is Homeobox protein ceh-24, found in Caenorhabditis elegans.